A 1036-amino-acid polypeptide reads, in one-letter code: MALRGAAGATDTPVSSAGGAPGGSASSSSTSSGGSASAGAGLWAALYDYEARGEDELSLRRGQLVEVLSQDAAVSGDEGWWAGQVQRRLGIFPANYVAPCRPAASPAPPPSRPSSPVHVAFERLELKELIGAGGFGQVYRATWQGQEVAVKAARQDPEQDAAAAAESVRREARLFAMLRHPNIIELRGVCLQQPHLCLVLEFARGGALNRALAAANAAPDPRAPGPRRARRIPPHVLVNWAVQIARGMLYLHEEAFVPILHRDLKSSNILLLEKIEHDDICNKTLKITDFGLAREWHRTTKMSTAGTYAWMAPEVIKSSLFSKGSDIWSYGVLLWELLTGEVPYRGIDGLAVAYGVAVNKLTLPIPSTCPEPFAKLMKECWQQDPHIRPSFALILEQLTAIEGAVMTEMPQESFHSMQDDWKLEIQQMFDELRTKEKELRSREEELTRAALQQKSQEELLKRREQQLAEREIDVLERELNILIFQLNQEKPKVKKRKGKFKRSRLKLKDGHRISLPSDFQHKITVQASPNLDKRRSLNSSSSSPPSSPTMMPRLRAIQLTSDESNKTWGRNTVFRQEEFEDVKRNFKKKGCTWGPNSIQMKDRTDCKERIRPLSDGNSPWSTILIKNQKTMPLASLFVDQPGSCEEPKLSPDGLEHRKPKQIKLPSQAYIDLPLGKDAQRENPAEAESWEEAASANAATVSIEMTPTNSLSRSPQRKKTESALYGCTVLLASVALGLDLRELHKAQAAEEPLPKEEKKKREGIFQRASKSRRSASPPTSLPSTCGEASSPPSLPLSSALGILSTPSFSTKCLLQMDSEDPLVDSAPVTCDSEMLTPDFCPTAPGSGREPALMPRLDTDCSVSRNLPSSFLQQTCGNVPYCASSKHRPSHHRRTMSDGNPTPTGATIISATGASALPLCPSPAPHSHLPREVSPKKHSTVHIVPQRRPASLRSRSDLPQAYPQTAVSQLAQTACVVGRPGPHPTQFLAAKERTKSHVPSLLDADVEGQSRDYTVPLCRMRSKTSRPSIYELEKEFLS.

The interval 1 to 36 (MALRGAAGATDTPVSSAGGAPGGSASSSSTSSGGSA) is disordered. The segment covering 15-36 (SSAGGAPGGSASSSSTSSGGSA) has biased composition (low complexity). The 65-residue stretch at 38 to 102 (AGAGLWAALY…PANYVAPCRP (65 aa)) folds into the SH3 domain. The region spanning 124–401 (LELKELIGAG…ALILEQLTAI (278 aa)) is the Protein kinase domain. Residues 130 to 138 (IGAGGFGQV) and Lys151 contribute to the ATP site. Asp263 functions as the Proton acceptor in the catalytic mechanism. Thr299 carries the phosphothreonine; by autocatalysis modification. The residue at position 303 (Ser303) is a Phosphoserine; by autocatalysis and MAP4K1. 2 leucine-zipper regions span residues 425-446 (IQQM…EEEL) and 460-481 (LKRR…ELNI). Positions 517 to 551 (SDFQHKITVQASPNLDKRRSLNSSSSSPPSSPTMM) are disordered. 3 positions are modified to phosphoserine: Ser528, Ser543, and Ser547. The residue at position 592 (Thr592) is a Phosphothreonine. Ser614 carries the phosphoserine modification. Basic and acidic residues predominate over residues 748–763 (AEEPLPKEEKKKREGI). Disordered regions lie at residues 748–791 (AEEP…SSPP) and 923–954 (PHSH…RSRS).

The protein belongs to the protein kinase superfamily. STE Ser/Thr protein kinase family. MAP kinase kinase kinase subfamily. As to quaternary structure, homodimer. Interacts with TLR4. It depends on Mg(2+) as a cofactor. In terms of processing, autophosphorylation on serine and threonine residues within the activation loop plays a role in enzyme activation.

It catalyses the reaction L-seryl-[protein] + ATP = O-phospho-L-seryl-[protein] + ADP + H(+). It carries out the reaction L-threonyl-[protein] + ATP = O-phospho-L-threonyl-[protein] + ADP + H(+). With respect to regulation, homodimerization via the leucine zipper domains is required for autophosphorylation and subsequent activation. Its function is as follows. Negative regulator of TLR4 signaling. Does not activate JNK1/MAPK8 pathway, p38/MAPK14, nor ERK2/MAPK1 pathways. The protein is Mitogen-activated protein kinase kinase kinase 21 of Homo sapiens (Human).